The chain runs to 169 residues: NADH-quinone oxidoreductase subunit B (169 aa).

Positions 42, 43, 107, and 136 each coordinate [4Fe-4S] cluster.

The protein belongs to the complex I 20 kDa subunit family. NDH-1 is composed of 14 different subunits. Subunits NuoB, C, D, E, F, and G constitute the peripheral sector of the complex. [4Fe-4S] cluster is required as a cofactor.

The protein localises to the cell inner membrane. It carries out the reaction a quinone + NADH + 5 H(+)(in) = a quinol + NAD(+) + 4 H(+)(out). In terms of biological role, NDH-1 shuttles electrons from NADH, via FMN and iron-sulfur (Fe-S) centers, to quinones in the respiratory chain. Couples the redox reaction to proton translocation (for every two electrons transferred, four hydrogen ions are translocated across the cytoplasmic membrane), and thus conserves the redox energy in a proton gradient. The chain is NADH-quinone oxidoreductase subunit B from Campylobacter hominis (strain ATCC BAA-381 / DSM 21671 / CCUG 45161 / LMG 19568 / NCTC 13146 / CH001A).